We begin with the raw amino-acid sequence, 115 residues long: U3-lycotoxin-Ls1i (115 aa).

The signal sequence occupies residues 1–20 (MKFVLLFGVFLVTLFSYSSA). Positions 21 to 44 (EMLDDFDQADEDELLSLIEKEEAR) are excised as a propeptide. 4 disulfides stabilise this stretch: Cys-48–Cys-63, Cys-55–Cys-72, Cys-62–Cys-87, and Cys-74–Cys-85.

It belongs to the neurotoxin 19 (CSTX) family. 01 subfamily. In terms of tissue distribution, expressed by the venom gland.

The protein localises to the secreted. In Lycosa singoriensis (Wolf spider), this protein is U3-lycotoxin-Ls1i.